The sequence spans 1159 residues: Syntaxin-binding protein 5-like (1159 aa).

Residues 1–37 are disordered; it reads MKKFRKVLDGLTTSSPVNPGGSPGCGSAAGTPSAAPT. Over residues 25–37 the composition is skewed to low complexity; it reads CGSAAGTPSAAPT. 10 WD repeats span residues 67-108, 115-154, 159-195, 214-248, 254-286, 307-350, 358-392, 414-491, 519-628, and 642-703; these read TALA…CHSQ, VLQMQFLINEGALVTACADDTLHLWSLRQRLPAILHSLKF, ITFCHLPFQSKWLYVGTERGNTHIVNIESFILSGYVI, HLSDSPKDEGKLLIGFESGTIVMWDLRAKRADFRI, IHSVSWHHEGRQFMCSHSDGSLSMWNMRNTAKP, PILK…KAIT, IVDFMVLCETPYLNEVQEPYAVVVLLEKDFVVVDL, TCTA…YKLK, QMIS…ELVV, and TCLD…STSG. 2 disordered regions span residues 571–604 and 690–770; these read SDTENTPCFSDPSGHSPQPQPPSPRSNTPDSVRD and LTRS…KAQS. Polar residues-rich tracts occupy residues 699-713 and 721-739; these read QSTSGLTELSDNQVS and SPTSDHVNGHCTSPTSQPC. 4 WD repeats span residues 808–865, 874–946, 951–995, and 1009–1032; these read VTTL…TGTV, RFGF…QACL, ITES…LDVS, and CFTNGGQALYLCSPTEIQRITYSQ. Residues 1094–1154 form the v-SNARE coiled-coil homology domain; sequence GIEGMKAAAG…HELMLKCKDK (61 aa).

Belongs to the WD repeat L(2)GL family.

It is found in the cytoplasm. The protein resides in the cell membrane. The protein localises to the membrane. May play a role in vesicle trafficking and exocytosis. In Danio rerio (Zebrafish), this protein is Syntaxin-binding protein 5-like (stxbp5l).